Consider the following 93-residue polypeptide: MARSLKKNPFVANHLLKKIDKLNRKAEKEIIRTWSRGSTIIPTMIGHTIAIHNGKEHLPIYITDHMVGHKLGEFASTFNFRGHTKSDNKSRRR.

Belongs to the universal ribosomal protein uS19 family.

The protein localises to the plastid. The protein resides in the chloroplast. Its function is as follows. Protein S19 forms a complex with S13 that binds strongly to the 16S ribosomal RNA. This chain is Small ribosomal subunit protein uS19c, found in Ipomoea purpurea (Common morning glory).